The primary structure comprises 208 residues: MSYQEKNAMSPIIDALVPMVVEQTSRGERSYDIYSRLLKERVIFLTGQVEDHMANLVVAQLLFLESENPDKDIFLYINSPGGSVTAGMSIYDTMQFIKPNVSTVCMGQACSMGAFLLAGGAPGKRYVLPNSRVMIHQPLGGFQGQASDIQIHAQEILTIKQKLNNLLAEHTGQPLEVIERDTDRDNFMSADQAVEYGIVDAVLSHRGE.

The Nucleophile role is filled by Ser-111. Residue His-136 is part of the active site.

This sequence belongs to the peptidase S14 family. In terms of assembly, fourteen ClpP subunits assemble into 2 heptameric rings which stack back to back to give a disk-like structure with a central cavity, resembling the structure of eukaryotic proteasomes.

It is found in the cytoplasm. It catalyses the reaction Hydrolysis of proteins to small peptides in the presence of ATP and magnesium. alpha-casein is the usual test substrate. In the absence of ATP, only oligopeptides shorter than five residues are hydrolyzed (such as succinyl-Leu-Tyr-|-NHMec, and Leu-Tyr-Leu-|-Tyr-Trp, in which cleavage of the -Tyr-|-Leu- and -Tyr-|-Trp bonds also occurs).. Its function is as follows. Cleaves peptides in various proteins in a process that requires ATP hydrolysis. Has a chymotrypsin-like activity. Plays a major role in the degradation of misfolded proteins. The chain is ATP-dependent Clp protease proteolytic subunit from Vibrio campbellii (strain ATCC BAA-1116).